The chain runs to 72 residues: MAIQSKYSNTQVESIIAELLAVLEKHQAPTDLSLMALGNCVTHLLQNKVPAESRKVVTEQFAKALSQSVKTN.

This sequence belongs to the UPF0352 family.

The protein is UPF0352 protein Shal_2512 of Shewanella halifaxensis (strain HAW-EB4).